A 128-amino-acid polypeptide reads, in one-letter code: Protein ApaG (128 aa).

Positions 1-123 constitute an ApaG domain; the sequence is MTSSPDITVS…FRLDIAPESG (123 aa).

This is Protein ApaG from Deinococcus radiodurans (strain ATCC 13939 / DSM 20539 / JCM 16871 / CCUG 27074 / LMG 4051 / NBRC 15346 / NCIMB 9279 / VKM B-1422 / R1).